We begin with the raw amino-acid sequence, 130 residues long: Small ribosomal subunit protein uS11 (130 aa).

It belongs to the universal ribosomal protein uS11 family. Part of the 30S ribosomal subunit. Interacts with proteins S7 and S18. Binds to IF-3.

In terms of biological role, located on the platform of the 30S subunit, it bridges several disparate RNA helices of the 16S rRNA. Forms part of the Shine-Dalgarno cleft in the 70S ribosome. The polypeptide is Small ribosomal subunit protein uS11 (Prochlorococcus marinus (strain MIT 9301)).